We begin with the raw amino-acid sequence, 469 residues long: MTAQTLYDKLWNSHVVREEGDGTVLLYIDRHLVHEVTSPQAFEGLKMAGRKLWRIDSVVSTADHNTPTGDWDKGIQDPISKLQVDTLDQNIKEFGALAYFPFMDKGQGIVHVMGPEQGATLPGMTVVCGDSHTSTHGAFGALAHGIGTSEVEHTMATQCITAKKSKSMLIAVDGKLKAGVTAKDVALYIIGQIGTAGGTGYAVEFGGEAIRSLSMEGRMTLCNMAIEAGARSGMVAVDQTTIDYVKGKPFAPEGEAWDKAVEYWRTLVSDEGAVFDKEYRFNAEDIEPQVTWGTSPEMVLNIGGKVPNPAEETDPVKRSGIERALEYMGLKAGTPLNEIPVDIVFIGSCTNSRIEDLREAAAIAKGHKKAGNVQRVLIVPGSGLVKEQAEKEGLDKIFIEAGFEWREPGCSMCLAMNADRLAPRQRCASTSNRNFEGRQGNGGRTHLVSPAMAAAAAVTGHFTDIRTMA.

The [4Fe-4S] cluster site is built by Cys-349, Cys-410, and Cys-413.

The protein belongs to the aconitase/IPM isomerase family. LeuC type 1 subfamily. In terms of assembly, heterodimer of LeuC and LeuD. It depends on [4Fe-4S] cluster as a cofactor.

It carries out the reaction (2R,3S)-3-isopropylmalate = (2S)-2-isopropylmalate. Its pathway is amino-acid biosynthesis; L-leucine biosynthesis; L-leucine from 3-methyl-2-oxobutanoate: step 2/4. Catalyzes the isomerization between 2-isopropylmalate and 3-isopropylmalate, via the formation of 2-isopropylmaleate. This Neisseria gonorrhoeae (strain NCCP11945) protein is 3-isopropylmalate dehydratase large subunit.